The primary structure comprises 2885 residues: Chromodomain-helicase-DNA-binding protein 9 (2885 aa).

Positions 173-195 (QCSSLHSQQSRSNLNPGQNSLGQ) are disordered. Residue Lys197 forms a Glycyl lysine isopeptide (Lys-Gly) (interchain with G-Cter in SUMO2) linkage. 3 disordered regions span residues 242-263 (CSSH…CSVS), 283-347 (SLLQ…QGNY), and 479-677 (CLQR…QPLQ). Polar residues-rich tracts occupy residues 243 to 263 (SSHQ…CSVS) and 283 to 310 (SLLQ…NSFS). A compositionally biased stretch (low complexity) spans 323 to 334 (LLNPTPSLNSNN). 2 stretches are compositionally biased toward polar residues: residues 335-347 (FQIL…QGNY) and 483-505 (QPPS…TQVR). At Lys498 the chain carries N6-acetyllysine. Basic and acidic residues-rich tracts occupy residues 507–526 (MSEK…EKAN) and 534–544 (ARAKERGERNI). Phosphoserine is present on Ser549. Positions 572–592 (KPKDRDNKKPKTYSKLKEKTK) are enriched in basic and acidic residues. A Glycyl lysine isopeptide (Lys-Gly) (interchain with G-Cter in SUMO2) cross-link involves residue Lys595. Residue Ser610 is modified to Phosphoserine. Positions 617-630 (AEQRSQHTFKEQHS) are enriched in basic and acidic residues. Residues 631–643 (QKRRSNRQIKRKK) are compositionally biased toward basic residues. A compositionally biased stretch (basic and acidic residues) spans 644 to 659 (YAEDAEGKQSEEEVKG). Chromo domains follow at residues 689 to 760 (AIVD…HFLA) and 772 to 838 (VEVD…HLDR). The short motif at 867 to 871 (LNWLL) is the LXXLL motif 1 element. The Helicase ATP-binding domain maps to 871–1045 (LFNWYNRRNC…FSLLHFLEPL (175 aa)). Residue 884 to 891 (DEMGLGKT) participates in ATP binding. The DEAH box signature appears at 996–999 (DEAH). Residues 1035–1039 (LFSLL) carry the LXXLL motif 2 motif. A Helicase C-terminal domain is found at 1185-1336 (LIDKLLPKMK…KAVLQSMSGR (152 aa)). Residues 1460–1484 (KDELAELSEAESEGEEKPKLRRPCD) form a disordered region. Acidic residues predominate over residues 1464-1473 (AELSEAESEG). Phosphoserine is present on residues Ser1467 and Ser1471. Residues 1474–1484 (EEKPKLRRPCD) are compositionally biased toward basic and acidic residues. Glycyl lysine isopeptide (Lys-Gly) (interchain with G-Cter in SUMO2) cross-links involve residues Lys1587, Lys1737, and Lys1902. Phosphoserine is present on Ser2025. The LXXLL motif 3 signature appears at 2030 to 2034 (LPRLL). Residue Lys2037 forms a Glycyl lysine isopeptide (Lys-Gly) (interchain with G-Cter in SUMO2) linkage. The segment at 2046–2238 (VKSESLTEEP…TQDSFQANNG (193 aa)) is disordered. A phosphoserine mark is found at Ser2057 and Ser2058. Residue Lys2073 forms a Glycyl lysine isopeptide (Lys-Gly) (interchain with G-Cter in SUMO2) linkage. Residues Ser2074 and Ser2078 each carry the phosphoserine modification. The span at 2083 to 2092 (VLSQATGDQK) shows a compositional bias: polar residues. Residues 2093–2103 (SGGKSETDRRM) are compositionally biased toward basic and acidic residues. The segment covering 2127–2193 (SQSSSDSDSD…SSSSSSSSSS (67 aa)) has biased composition (low complexity). Positions 2201–2215 (DVQKREGTPHRKAYD) are enriched in basic and acidic residues. Residues 2220-2238 (ASLSTTQDETQDSFQANNG) are compositionally biased toward polar residues. Residues 2331 to 2471 (QMSKVKKHVR…LSYPQPQRIP (141 aa)) form a binds A/T-rich DNA region. Residues Lys2349, Lys2355, and Lys2360 each participate in a glycyl lysine isopeptide (Lys-Gly) (interchain with G-Cter in SUMO2) cross-link. Residues 2428-2435 (KKRRGRRR) form an a.T hook-like region. Residues 2473–2494 (TESPVPVINLKDGTRLAGDDAP) form a disordered region. Over residues 2484–2494 (DGTRLAGDDAP) the composition is skewed to basic and acidic residues. The LXXLL motif 4 motif lies at 2710–2714 (LPNLL). Residues 2724 to 2770 (AESGAEEKRGNDSKELEGKKERTESQSPENGGERCVPGSPSTSSTAA) form a disordered region. A compositionally biased stretch (basic and acidic residues) spans 2728–2747 (AEEKRGNDSKELEGKKERTE). An LXXLL motif 5 motif is present at residues 2782–2786 (LNPLL). Over residues 2818-2847 (KNKSDDLDSSKSVEIKEENSRVRDQEEKGG) the composition is skewed to basic and acidic residues. A disordered region spans residues 2818-2885 (KNKSDDLDSS…SEDSDSSNED (68 aa)). A Glycyl lysine isopeptide (Lys-Gly) (interchain with G-Cter in SUMO2) cross-link involves residue Lys2833. Residues 2864 to 2876 (RASSGSDSSSSSS) are compositionally biased toward low complexity.

This sequence belongs to the SNF2/RAD54 helicase family. In terms of assembly, interacts with PPARA. Probably interacts with ESR1 and NR1I3. Phosphorylated on serine and tyrosine residues. In terms of tissue distribution, expressed in osteoprogenitor cells during development and in mature bone (at protein level).

It is found in the cytoplasm. The protein resides in the nucleus. It carries out the reaction ATP + H2O = ADP + phosphate + H(+). Functionally, probable ATP-dependent chromatin-remodeling factor. Acts as a transcriptional coactivator for PPARA and possibly other nuclear receptors. Has DNA-dependent ATPase activity and binds to A/T-rich DNA. Associates with A/T-rich regulatory regions in promoters of genes that participate in the differentiation of progenitors during osteogenesis. The chain is Chromodomain-helicase-DNA-binding protein 9 (Chd9) from Mus musculus (Mouse).